We begin with the raw amino-acid sequence, 65 residues long: Muscarinic toxin 3 (65 aa).

Cystine bridges form between cysteine 3/cysteine 24, cysteine 17/cysteine 42, cysteine 46/cysteine 57, and cysteine 58/cysteine 63.

The protein belongs to the three-finger toxin family. Short-chain subfamily. Aminergic toxin sub-subfamily. In terms of tissue distribution, expressed by the venom gland.

The protein resides in the secreted. Functionally, potent antagonist (IC(50)=1-10 nM) of M4 (CHRM4) muscarinic receptors, and CHRM1, ADRA1A, ADRA2A and ADRA2C adrenergic receptors. Also antagonises ADRA1B and ADRA1D adrenergic receptors with a 10-times lower affinity. The polypeptide is Muscarinic toxin 3 (Dendroaspis angusticeps (Eastern green mamba)).